We begin with the raw amino-acid sequence, 252 residues long: Pantothenate synthetase (252 aa).

29–36 lines the ATP pocket; sequence MGNLHAGH. The active-site Proton donor is the His36. Gln60 lines the (R)-pantoate pocket. Residue Gln60 participates in beta-alanine binding. 146–149 is an ATP binding site; the sequence is GEKD. A (R)-pantoate-binding site is contributed by Gln152. ATP-binding positions include Val175 and 183 to 186; that span reads CSSR.

It belongs to the pantothenate synthetase family. As to quaternary structure, homodimer.

The protein localises to the cytoplasm. The catalysed reaction is (R)-pantoate + beta-alanine + ATP = (R)-pantothenate + AMP + diphosphate + H(+). The protein operates within cofactor biosynthesis; (R)-pantothenate biosynthesis; (R)-pantothenate from (R)-pantoate and beta-alanine: step 1/1. Its function is as follows. Catalyzes the condensation of pantoate with beta-alanine in an ATP-dependent reaction via a pantoyl-adenylate intermediate. This Legionella pneumophila (strain Lens) protein is Pantothenate synthetase.